A 567-amino-acid chain; its full sequence is DNA ligase (567 aa).

Glu-260 contacts ATP. Lys-262 acts as the N6-AMP-lysine intermediate in catalysis. Residues Arg-267, Arg-282, Glu-312, Phe-352, Arg-427, and Lys-433 each coordinate ATP.

Belongs to the ATP-dependent DNA ligase family. Requires Mg(2+) as cofactor.

It catalyses the reaction ATP + (deoxyribonucleotide)n-3'-hydroxyl + 5'-phospho-(deoxyribonucleotide)m = (deoxyribonucleotide)n+m + AMP + diphosphate.. DNA ligase that seals nicks in double-stranded DNA during DNA replication, DNA recombination and DNA repair. The polypeptide is DNA ligase (Methanococcoides burtonii (strain DSM 6242 / NBRC 107633 / OCM 468 / ACE-M)).